The sequence spans 528 residues: NAD(P)H-quinone oxidoreductase chain 4 1 (528 aa).

14 helical membrane passes run 7 to 27, 32 to 52, 86 to 106, 114 to 134, 136 to 156, 168 to 188, 208 to 228, 242 to 262, 276 to 296, 310 to 330, 331 to 351, 375 to 395, 417 to 437, and 463 to 483; these read FPWL…IPLI, WVRW…AYVF, LSLP…VAAW, LFFF…LAQD, LLFF…ISIW, FILY…AMAF, ALEL…LPIF, SAPI…YGLI, FAPV…LAAF, IAHM…GING, AVLQ…LTGI, FALF…SGFV, GIAL…LSML, and MAVA…PRLA.

It belongs to the complex I subunit 4 family.

Its subcellular location is the cellular thylakoid membrane. The enzyme catalyses a plastoquinone + NADH + (n+1) H(+)(in) = a plastoquinol + NAD(+) + n H(+)(out). The catalysed reaction is a plastoquinone + NADPH + (n+1) H(+)(in) = a plastoquinol + NADP(+) + n H(+)(out). In terms of biological role, NDH-1 shuttles electrons from NAD(P)H, via FMN and iron-sulfur (Fe-S) centers, to quinones in the respiratory chain. The immediate electron acceptor for the enzyme in this species is believed to be plastoquinone. Couples the redox reaction to proton translocation (for every two electrons transferred, four hydrogen ions are translocated across the cytoplasmic membrane), and thus conserves the redox energy in a proton gradient. The protein is NAD(P)H-quinone oxidoreductase chain 4 1 of Synechococcus sp. (strain JA-2-3B'a(2-13)) (Cyanobacteria bacterium Yellowstone B-Prime).